Reading from the N-terminus, the 569-residue chain is Membrane protein insertase YidC (569 aa).

Helical transmembrane passes span 7–24, 219–239, 299–319, 340–360, 366–386, 436–456, 485–505, and 526–546; these read VLWV…DNYN, GSAL…PAIY, LYAV…TASM, FELV…FWLM, ILGN…LAFF, IGGC…YWVL, IGTF…SMFI, and PIAF…YWVV.

This sequence belongs to the OXA1/ALB3/YidC family. Type 1 subfamily. Interacts with the Sec translocase complex via SecD. Specifically interacts with transmembrane segments of nascent integral membrane proteins during membrane integration.

It is found in the cell inner membrane. Required for the insertion and/or proper folding and/or complex formation of integral membrane proteins into the membrane. Involved in integration of membrane proteins that insert both dependently and independently of the Sec translocase complex, as well as at least some lipoproteins. Aids folding of multispanning membrane proteins. This Herminiimonas arsenicoxydans protein is Membrane protein insertase YidC.